The primary structure comprises 119 residues: Large ribosomal subunit protein uL18 (119 aa).

The segment at 1-20 (MSQIDKAARRQKIKARSRAT) is disordered. Residues 9-19 (RRQKIKARSRA) show a composition bias toward basic residues.

The protein belongs to the universal ribosomal protein uL18 family. As to quaternary structure, part of the 50S ribosomal subunit; part of the 5S rRNA/L5/L18/L25 subcomplex. Contacts the 5S and 23S rRNAs.

Its function is as follows. This is one of the proteins that bind and probably mediate the attachment of the 5S RNA into the large ribosomal subunit, where it forms part of the central protuberance. The protein is Large ribosomal subunit protein uL18 of Chlorobaculum parvum (strain DSM 263 / NCIMB 8327) (Chlorobium vibrioforme subsp. thiosulfatophilum).